The following is a 173-amino-acid chain: Small ribosomal subunit protein uS5 (173 aa).

The S5 DRBM domain occupies 18–81 (YVEKLVKLNR…EKAKANMVTF (64 aa)).

The protein belongs to the universal ribosomal protein uS5 family. As to quaternary structure, part of the 30S ribosomal subunit. Contacts proteins S4 and S8.

In terms of biological role, with S4 and S12 plays an important role in translational accuracy. Its function is as follows. Located at the back of the 30S subunit body where it stabilizes the conformation of the head with respect to the body. The protein is Small ribosomal subunit protein uS5 of Treponema denticola (strain ATCC 35405 / DSM 14222 / CIP 103919 / JCM 8153 / KCTC 15104).